An 862-amino-acid polypeptide reads, in one-letter code: MSSGLKKKGLEWDLNDWRWDSNLFLATPSNASPSKCSRRELGRAEGEIDFGVVDKRRRVSPEDDDGEECINAATTNGDDGQISGQRGRSSEDEMPRQGTCSSSGPCCQVDGCTVNLSSARDYNKRHKVCEVHTKSGVVRIKNVEHRFCQQCSRFHFLQEFDEGKKSCRSRLAQHNRRRRKVQVQAGVDVNSLHENHSLSNTLLLLLKQLSGLDSSGPSEQINGPNYLTNLVKNLAALAGTQRNQDMLKNANSAAIASHTGNYVAKGNSLHDSRPHIPVGTESTAEEPTVERRVQNFDLNDAYVEGDENRTDKIVFKLFGKEPNDFPSDLRAQILSWLSNCPSDIESYIRPGCIILTIYMRLPNWMWDKLAADPAHWIQKLISLSTDTLWRTGWMYARVQDYLTLSCNGNLMLASPWQPAIGNKHQILFITPIAVACSSTANFSVKGLNIAQPTTKLLCIFGGKYLIQEATEKLLDDTKMQRGPQCLTFSCSFPSTSGRGFIEVEDLDQSSLSFPFVVAEEDVCSEIRTLEHLLNLVSFDDTLVEKNDLLASRDRALNFLHEFGWFLQRSHIRATSETPKDCTEGFPAARFRWLLSFAVDREFCAVIKKLLDTLFQGGVDLDVQSTVEFVLKQDLVFVAVNKRSKPLIDFLLTYTTSSAPMDGTESAAPAQFLFTPDIAGPSDITPLHIAATYSDTAGVLDALTDDPQQLGIKAWKNARDATGLTPEDYARKRGHESYIEMVQNKIDSRLPKAHVSVTISSTTSTTDFTEKHASQSKTTDQTAFDVEKGQQISTKPPLSCRQCLPELAYRHHLNRFLSTRPAVLSLVAIAAVCVCVGLIMQGPPHIGGMRGPFRWNSLRSGPK.

Residues K55 to G98 form a disordered region. Residues A72–G87 show a composition bias toward polar residues. An SBP-type zinc finger spans residues G104–V181. Positions 107, 112, 129, 132, 148, 151, 155, and 167 each coordinate Zn(2+). The short motif at K164–K180 is the Bipartite nuclear localization signal element.

As to expression, ubiquitous.

The protein localises to the nucleus. Trans-acting factor that binds specifically to the consensus nucleotide sequence 5'-TNCGTACAA-3'. The chain is Squamosa promoter-binding-like protein 1 (SPL1) from Oryza sativa subsp. japonica (Rice).